A 736-amino-acid polypeptide reads, in one-letter code: Phosphoribosylformylglycinamidine synthase subunit PurL (736 aa).

Histidine 49 is a catalytic residue. 2 residues coordinate ATP: tyrosine 52 and lysine 91. Residue glutamate 93 coordinates Mg(2+). Substrate contacts are provided by residues 94–97 (SHNH) and arginine 116. The active-site Proton acceptor is the histidine 95. Mg(2+) is bound at residue aspartate 117. Glutamine 240 lines the substrate pocket. A Mg(2+)-binding site is contributed by aspartate 268. 312–314 (ESQ) serves as a coordination point for substrate. 2 residues coordinate ATP: aspartate 493 and glycine 530. Residue asparagine 531 participates in Mg(2+) binding. Position 533 (serine 533) interacts with substrate.

Belongs to the FGAMS family. In terms of assembly, monomer. Part of the FGAM synthase complex composed of 1 PurL, 1 PurQ and 2 PurS subunits.

The protein localises to the cytoplasm. It catalyses the reaction N(2)-formyl-N(1)-(5-phospho-beta-D-ribosyl)glycinamide + L-glutamine + ATP + H2O = 2-formamido-N(1)-(5-O-phospho-beta-D-ribosyl)acetamidine + L-glutamate + ADP + phosphate + H(+). The protein operates within purine metabolism; IMP biosynthesis via de novo pathway; 5-amino-1-(5-phospho-D-ribosyl)imidazole from N(2)-formyl-N(1)-(5-phospho-D-ribosyl)glycinamide: step 1/2. In terms of biological role, part of the phosphoribosylformylglycinamidine synthase complex involved in the purines biosynthetic pathway. Catalyzes the ATP-dependent conversion of formylglycinamide ribonucleotide (FGAR) and glutamine to yield formylglycinamidine ribonucleotide (FGAM) and glutamate. The FGAM synthase complex is composed of three subunits. PurQ produces an ammonia molecule by converting glutamine to glutamate. PurL transfers the ammonia molecule to FGAR to form FGAM in an ATP-dependent manner. PurS interacts with PurQ and PurL and is thought to assist in the transfer of the ammonia molecule from PurQ to PurL. The sequence is that of Phosphoribosylformylglycinamidine synthase subunit PurL from Rhodopseudomonas palustris (strain TIE-1).